The chain runs to 101 residues: Small ribosomal subunit protein uS10 (101 aa).

It belongs to the universal ribosomal protein uS10 family. In terms of assembly, part of the 30S ribosomal subunit.

Its function is as follows. Involved in the binding of tRNA to the ribosomes. In Christiangramia forsetii (strain DSM 17595 / CGMCC 1.15422 / KT0803) (Gramella forsetii), this protein is Small ribosomal subunit protein uS10.